Reading from the N-terminus, the 445-residue chain is Glutamate-1-semialdehyde 2,1-aminomutase (445 aa).

At lysine 281 the chain carries N6-(pyridoxal phosphate)lysine.

The protein belongs to the class-III pyridoxal-phosphate-dependent aminotransferase family. HemL subfamily. As to quaternary structure, homodimer. Pyridoxal 5'-phosphate serves as cofactor.

The protein resides in the cytoplasm. It catalyses the reaction (S)-4-amino-5-oxopentanoate = 5-aminolevulinate. It functions in the pathway porphyrin-containing compound metabolism; protoporphyrin-IX biosynthesis; 5-aminolevulinate from L-glutamyl-tRNA(Glu): step 2/2. The polypeptide is Glutamate-1-semialdehyde 2,1-aminomutase (Nocardioides sp. (strain ATCC BAA-499 / JS614)).